The primary structure comprises 326 residues: Peroxidase 1 (326 aa).

A signal peptide spans 1-22 (MASSRVILALLLAAAAVMASSA). A Pyrrolidone carboxylic acid modification is found at Gln23. 4 disulfide bridges follow: Cys33–Cys112, Cys66–Cys71, Cys118–Cys322, and Cys196–Cys231. His64 serves as the catalytic Proton acceptor. Positions 65, 68, 70, 72, and 74 each coordinate Ca(2+). N-linked (GlcNAc...) asparagine glycans are attached at residues Asn82 and Asn153. Residue Pro159 participates in substrate binding. Asn164 is a glycosylation site (N-linked (GlcNAc...) asparagine). A heme b-binding site is contributed by His189. A Ca(2+)-binding site is contributed by Thr190. 2 N-linked (GlcNAc...) asparagine glycosylation sites follow: Asn205 and Asn237. 3 residues coordinate Ca(2+): Asp244, Ser247, and Asp252.

The protein belongs to the peroxidase family. Classical plant (class III) peroxidase subfamily. The cofactor is Ca(2+). Requires heme b as cofactor.

The protein resides in the secreted. The catalysed reaction is 2 a phenolic donor + H2O2 = 2 a phenolic radical donor + 2 H2O. Removal of H(2)O(2), oxidation of toxic reductants, biosynthesis and degradation of lignin, suberization, auxin catabolism, response to environmental stresses such as wounding, pathogen attack and oxidative stress. These functions might be dependent on each isozyme/isoform in each plant tissue. The polypeptide is Peroxidase 1 (PRX74) (Oryza sativa subsp. japonica (Rice)).